Reading from the N-terminus, the 172-residue chain is Orotate phosphoribosyltransferase (172 aa).

Residues Arg88, Lys89, Lys92, His94, and 113–121 each bind 5-phospho-alpha-D-ribose 1-diphosphate; that span reads EDVTTSGGS. The orotate site is built by Thr117 and Arg145.

The protein belongs to the purine/pyrimidine phosphoribosyltransferase family. PyrE subfamily. Homodimer. Mg(2+) serves as cofactor.

The catalysed reaction is orotidine 5'-phosphate + diphosphate = orotate + 5-phospho-alpha-D-ribose 1-diphosphate. It functions in the pathway pyrimidine metabolism; UMP biosynthesis via de novo pathway; UMP from orotate: step 1/2. In terms of biological role, catalyzes the transfer of a ribosyl phosphate group from 5-phosphoribose 1-diphosphate to orotate, leading to the formation of orotidine monophosphate (OMP). The chain is Orotate phosphoribosyltransferase from Methanospirillum hungatei JF-1 (strain ATCC 27890 / DSM 864 / NBRC 100397 / JF-1).